A 561-amino-acid polypeptide reads, in one-letter code: Asparagine synthetase [glutamine-hydrolyzing] (561 aa).

The For GATase activity role is filled by Cys-2. Residues Cys-2–Lys-191 enclose the Glutamine amidotransferase type-2 domain. L-glutamine-binding positions include Arg-49–Val-53, Asn-75–Glu-77, and Asp-97. In terms of domain architecture, Asparagine synthetase spans His-213–Tyr-536. Residues Leu-256, Ile-288, and Ser-363–Gly-364 contribute to the ATP site. Lys-385 bears the N6-acetyllysine mark. Thr-545 bears the Phosphothreonine mark. Position 557 is a phosphoserine (Ser-557).

It carries out the reaction L-aspartate + L-glutamine + ATP + H2O = L-asparagine + L-glutamate + AMP + diphosphate + H(+). It participates in amino-acid biosynthesis; L-asparagine biosynthesis; L-asparagine from L-aspartate (L-Gln route): step 1/1. The polypeptide is Asparagine synthetase [glutamine-hydrolyzing] (Asns) (Rattus norvegicus (Rat)).